A 192-amino-acid polypeptide reads, in one-letter code: Fe/S biogenesis protein NfuA (192 aa).

2 residues coordinate [4Fe-4S] cluster: Cys-150 and Cys-153.

This sequence belongs to the NfuA family. In terms of assembly, homodimer. [4Fe-4S] cluster is required as a cofactor.

Its function is as follows. Involved in iron-sulfur cluster biogenesis. Binds a 4Fe-4S cluster, can transfer this cluster to apoproteins, and thereby intervenes in the maturation of Fe/S proteins. Could also act as a scaffold/chaperone for damaged Fe/S proteins. The protein is Fe/S biogenesis protein NfuA of Buchnera aphidicola subsp. Acyrthosiphon pisum (strain APS) (Acyrthosiphon pisum symbiotic bacterium).